Consider the following 523-residue polypeptide: FAD:protein FMN transferase (523 aa).

3 helical membrane passes run 88–108 (LLAG…VALA), 118–138 (GGAA…LVLL), and 169–189 (GLAL…TAPA). Residues 277 to 279 (LFD) and D336 each bind FAD. A Mg(2+)-binding site is contributed by A339. Residues K342 and 423–425 (HII) contribute to the FAD site. Mg(2+)-binding residues include D450 and T454.

In the N-terminal section; belongs to the RseC family. The protein in the C-terminal section; belongs to the ApbE family. The cofactor is Mg(2+).

The protein resides in the cell membrane. The enzyme catalyses L-threonyl-[protein] + FAD = FMN-L-threonyl-[protein] + AMP + H(+). Flavin transferase that catalyzes the transfer of the FMN moiety of FAD and its covalent binding to the hydroxyl group of a threonine residue in a target flavoprotein. Is likely involved in the modification of RnfG and RnfD. Required for nitrogen fixation. The sequence is that of FAD:protein FMN transferase from Rhodobacter capsulatus (Rhodopseudomonas capsulata).